Consider the following 344-residue polypeptide: Arginine N-succinyltransferase (344 aa).

L125 is a succinyl-CoA binding site. Catalysis depends on H229, which acts as the Proton donor.

It belongs to the arginine N-succinyltransferase family.

The catalysed reaction is succinyl-CoA + L-arginine = N(2)-succinyl-L-arginine + CoA + H(+). Its pathway is amino-acid degradation; L-arginine degradation via AST pathway; L-glutamate and succinate from L-arginine: step 1/5. In terms of biological role, catalyzes the transfer of succinyl-CoA to arginine to produce N(2)-succinylarginine. In Salmonella agona (strain SL483), this protein is Arginine N-succinyltransferase.